Reading from the N-terminus, the 445-residue chain is Phosphoglucosamine mutase (445 aa).

The Phosphoserine intermediate role is filled by S101. 4 residues coordinate Mg(2+): S101, D240, D242, and D244. At S101 the chain carries Phosphoserine.

The protein belongs to the phosphohexose mutase family. Mg(2+) is required as a cofactor. In terms of processing, activated by phosphorylation.

It catalyses the reaction alpha-D-glucosamine 1-phosphate = D-glucosamine 6-phosphate. Functionally, catalyzes the conversion of glucosamine-6-phosphate to glucosamine-1-phosphate. The protein is Phosphoglucosamine mutase of Azotobacter vinelandii (strain DJ / ATCC BAA-1303).